Here is a 406-residue protein sequence, read N- to C-terminus: Mitochondrial ribosome-associated GTPase 2 (406 aa).

The interval 15 to 406 (FQGVGHWALS…LGQGRQPLRW (392 aa)) is localized in the mitochondria. Residues 30-406 (KPSRLLPQRA…LGQGRQPLRW (377 aa)) form a not localized in the mitochondria region. The Obg domain occupies 70–224 (RYFVDYRRVL…RVLHLELKTV (155 aa)). The OBG-type G domain maps to 225 to 390 (AHAGMVGFPN…LLLHLKVLYD (166 aa)). GTP is bound by residues 231-238 (GFPNAGKS), 256-260 (FTTLK), 278-281 (DIPG), 345-348 (NKID), and 371-373 (SAL). 2 residues coordinate Mg(2+): Ser238 and Thr258.

The protein belongs to the TRAFAC class OBG-HflX-like GTPase superfamily. OBG GTPase family. As to quaternary structure, associates with the mitochondrial ribosome large subunit; the association occurs in a GTP-dependent manner. Requires Mg(2+) as cofactor.

It localises to the mitochondrion. The protein resides in the mitochondrion inner membrane. Plays a role in the regulation of the mitochondrial ribosome assembly and of translational activity. Displays GTPase activity. Involved in the ribosome maturation process. The polypeptide is Mitochondrial ribosome-associated GTPase 2 (MTG2) (Homo sapiens (Human)).